Consider the following 105-residue polypeptide: Iron-sulfur cluster assembly protein CyaY (105 aa).

This sequence belongs to the frataxin family.

Functionally, involved in iron-sulfur (Fe-S) cluster assembly. May act as a regulator of Fe-S biogenesis. The chain is Iron-sulfur cluster assembly protein CyaY from Photobacterium profundum (strain SS9).